The chain runs to 77 residues: Teretoxin Tsu15.4 (77 aa).

An N-terminal signal peptide occupies residues 1-21 (MTKLTVLLLAILVLLPLATSN). The propeptide occupies 22-40 (SAADEALASLSGLLRRAKR).

In terms of processing, contains 4 disulfide bonds. In terms of tissue distribution, expressed by the venom duct.

It localises to the secreted. The protein is Teretoxin Tsu15.4 of Terebra subulata (Chocolate spotted auger).